The sequence spans 191 residues: Fe/S biogenesis protein NfuA (191 aa).

Residues Cys149 and Cys152 each contribute to the [4Fe-4S] cluster site.

This sequence belongs to the NfuA family. In terms of assembly, homodimer. [4Fe-4S] cluster serves as cofactor.

Functionally, involved in iron-sulfur cluster biogenesis. Binds a 4Fe-4S cluster, can transfer this cluster to apoproteins, and thereby intervenes in the maturation of Fe/S proteins. Could also act as a scaffold/chaperone for damaged Fe/S proteins. This is Fe/S biogenesis protein NfuA from Photorhabdus laumondii subsp. laumondii (strain DSM 15139 / CIP 105565 / TT01) (Photorhabdus luminescens subsp. laumondii).